A 120-amino-acid polypeptide reads, in one-letter code: Secreted RxLR effector protein RXLR-C26 (120 aa).

An N-terminal signal peptide occupies residues 1-29; that stretch reads MTGILCFPPFARFFMLLSGCAWLAGVSSG. The RxLR-dEER motif lies at 57-77; sequence RNLRGHINSAIIEANDTSEER. A glycan (N-linked (GlcNAc...) asparagine) is linked at Asn-71.

The protein belongs to the RxLR effector family.

The protein localises to the secreted. Its subcellular location is the host cytoplasm. The protein resides in the host nucleus. Secreted effector that does not suppress pattern-triggered immunity (PTI) in plant host. The chain is Secreted RxLR effector protein RXLR-C26 from Plasmopara halstedii (Downy mildew of sunflower).